We begin with the raw amino-acid sequence, 1328 residues long: ATP-dependent DNA helicase hus2/rqh1 (1328 aa).

Low complexity-rich tracts occupy residues 217-236 and 244-254; these read NNLP…NDNN and ASPTPSSVSSQ. The segment at 217-254 is disordered; sequence NNLPFPRLNNNNTNNNNDNNAIEKRDSASPTPSSVSSQ. In terms of domain architecture, Helicase ATP-binding spans 528 to 707; it reads INGTLSGKDV…INTLRMENCL (180 aa). 555–562 serves as a coordination point for ATP; that stretch reads AVIEGGAS. Residues 651 to 654 carry the DEAH box motif; the sequence is DEAH. A Helicase C-terminal domain is found at 728-876; the sequence is LYTELYRFIS…ETKERQRQML (149 aa). Residues 1115–1195 enclose the HRDC domain; the sequence is IDVMTRCLKD…QKFIDEKEQN (81 aa). 2 disordered regions span residues 1224–1247 and 1260–1328; these read EQGF…GDEE and NSQS…QNYR. Over residues 1260-1269 the composition is skewed to polar residues; sequence NSQSLTQTGS. The segment covering 1283–1300 has biased composition (basic residues); it reads KSYRHKRGSTSYSRKRKY.

Belongs to the helicase family. RecQ subfamily. In terms of assembly, interacts with top3.

The protein resides in the nucleus. The catalysed reaction is Couples ATP hydrolysis with the unwinding of duplex DNA by translocating in the 3'-5' direction.. It catalyses the reaction ATP + H2O = ADP + phosphate + H(+). Functionally, ATP-dependent 3'-5' DNA-helicase. Has a role in the repair of UV-induced DNA damage in G2 via recombination-mediated repair. Also has a role in the repair of infrared-induced double DNA strand breaks. This is ATP-dependent DNA helicase hus2/rqh1 from Schizosaccharomyces pombe (strain 972 / ATCC 24843) (Fission yeast).